A 245-amino-acid polypeptide reads, in one-letter code: Farnesol dehydrogenase (245 aa).

Residues 11–40 and Asp64 contribute to the NAD(+) site; that span reads VTGA…ARRV. Ser145 is a substrate binding site. Tyr160 acts as the Proton acceptor in catalysis. Residue Lys164 coordinates NAD(+).

It belongs to the short-chain dehydrogenases/reductases (SDR) family. Homodimer. As to expression, highly expressed level in the midgut and brain in adult females, and at lower level in the abdominal and thoracic ganglia. High levels are detected in corpora allata (CA), Malpighian tubules and fat body.

The enzyme catalyses (2E,6E)-farnesol + NADP(+) = (2E,6E)-farnesal + NADPH + H(+). Mediates oxidation of farnesol into farnesal, a precursor of juvenile hormone in the corpora allata (CA), the glands that synthesize juvenile hormone. Able to oxidize C(10) to C(15) isoprenoid and aliphatic alcohols. This Aedes aegypti (Yellowfever mosquito) protein is Farnesol dehydrogenase.